A 160-amino-acid polypeptide reads, in one-letter code: Nucleotide-binding protein VV1_2655 (160 aa).

This sequence belongs to the YajQ family.

Nucleotide-binding protein. The protein is Nucleotide-binding protein VV1_2655 of Vibrio vulnificus (strain CMCP6).